A 1157-amino-acid polypeptide reads, in one-letter code: Voltage-dependent calcium channel subunit alpha-2/delta-2 (1157 aa).

A signal peptide spans 1-18 (MAVPARTCGASWPGPVRT). Residues 1 to 37 (MAVPARTCGASWPGPVRTARPWPGRGPRPCPDPRGPA) are disordered. Residues 19–1119 (ARPWPGRGPR…TEDTSDCGRG (1101 aa)) are Extracellular-facing. The span at 24-34 (GRGPRPCPDPR) shows a compositional bias: pro residues. Asparagine 205 carries an N-linked (GlcNAc...) asparagine glycan. Residues 294 to 472 (DMVIIVDVSG…INTQEYLDVL (179 aa)) form the VWFA domain. Residues aspartate 300, serine 302, and serine 304 each contribute to the a divalent metal cation site. The short motif at 300 to 304 (DVSGS) is the MIDAS-like motif element. 6 N-linked (GlcNAc...) asparagine glycosylation sites follow: asparagine 389, asparagine 421, asparagine 510, asparagine 543, asparagine 627, and asparagine 864. Cysteine 446 and cysteine 1104 form a disulfide bridge. Residues 488-577 (WTNVYEDALG…KPQITNFREP (90 aa)) enclose the Cache domain. Residues 1120–1140 (ASFPPSLGVLVSLQLLLLLGL) form a helical membrane-spanning segment. Topologically, residues 1141–1157 (PPRPQPQIHSFTPSRRL) are cytoplasmic.

It belongs to the calcium channel subunit alpha-2/delta family. As to quaternary structure, dimer formed of alpha-2-2 and delta-2 chains; disulfide-linked. Voltage-dependent calcium channels are multisubunit complexes, consisting of alpha-1 (CACNA1), alpha-2 (CACNA2D), beta (CACNB) and delta (CACNA2D) subunits in a 1:1:1:1 ratio. N-glycosylated. In terms of processing, may be proteolytically processed into subunits alpha-2-2 and delta-2 that are disulfide-linked. It is however unclear whether such cleavage really takes place in vivo and has a functional role. In terms of tissue distribution, in heart, it is highly expressed in atrium and at lower level in ventricle.

The protein resides in the membrane. The alpha-2/delta subunit of voltage-dependent calcium channels regulates calcium current density and activation/inactivation kinetics of the calcium channel. Acts as a regulatory subunit for P/Q-type calcium channel (CACNA1A), N-type (CACNA1B), L-type (CACNA1C OR CACNA1D) and possibly T-type (CACNA1G). Overexpression induces apoptosis. This Rattus norvegicus (Rat) protein is Voltage-dependent calcium channel subunit alpha-2/delta-2 (Cacna2d2).